A 2002-amino-acid chain; its full sequence is Methylcytosine dioxygenase TET2 (2002 aa).

Over residues 1–11 the composition is skewed to basic and acidic residues; that stretch reads MEQDRTNHVEG. Positions 1–22 are disordered; sequence MEQDRTNHVEGNRLSPFLIPSP. 3 positions are modified to phosphoserine: Ser15, Ser75, and Ser99. Positions 113-124 are enriched in basic and acidic residues; it reads KQDQKANGERRN. Disordered stretches follow at residues 113 to 154, 266 to 287, 349 to 368, 390 to 488, 703 to 748, 930 to 949, and 1075 to 1095; these read KQDQ…VSSV, HPSHTSGQINSAQTSNSELPPK, GEEFCSGSSSNLQAPGGSSE, DSFS…VNRN, LNQQ…QQKL, VPDQGGSHTQTPPQKDTQKH, and DSHTPALEQQTTSSEKTPTKR. 2 stretches are compositionally biased toward polar residues: residues 126 to 143 and 267 to 283; these read GVSQERNPGESSQPNVSD and PSHTSGQINSAQTSNSE. Residues 397-416 show a composition bias toward pro residues; it reads TPPPPSQLLLSPPPPLPQVP. 2 stretches are compositionally biased toward polar residues: residues 479-488 and 703-718; these read RPQNNCVNRN and LNQQASETEPFSNSHL. Positions 731–748 are enriched in low complexity; that stretch reads QPSQSSHLPQNQQQQQKL. 2 stretches are compositionally biased toward polar residues: residues 935-944 and 1081-1095; these read GSHTQTPPQK and LEQQTTSSEKTPTKR. Ser1107 and Ser1109 each carry phosphoserine. Cys1133, Cys1135, Cys1193, His1219, and Cys1221 together coordinate Zn(2+). Arg1261 is a 2-oxoglutarate binding site. Cys1271, Cys1273, Cys1289, and Cys1298 together coordinate Zn(2+). Positions 1290 to 1303 are interaction with DNA; that stretch reads SWSMYYNGCKFARS. Lys1299 is covalently cross-linked (Glycyl lysine isopeptide (Lys-Gly) (interchain with G-Cter in ubiquitin)). Residue Cys1358 coordinates Zn(2+). Position 1374 (Cys1374) interacts with 2-oxoglutarate. A Zn(2+)-binding site is contributed by His1380. Fe cation is bound by residues His1382 and Asp1384. Asn1387 serves as a coordination point for substrate. 2-oxoglutarate is bound at residue His1416. Disordered stretches follow at residues 1475 to 1507 and 1521 to 1587; these read AAEKLSSLENSSNKNEKEKSAPSRTKQTENASQ and VMQQ…HTSD. The segment covering 1477–1487 has biased composition (low complexity); it reads EKLSSLENSSN. Residues 1496–1507 show a composition bias toward polar residues; sequence PSRTKQTENASQ. 2 stretches are compositionally biased toward low complexity: residues 1523–1532 and 1539–1551; these read QQSQQPQPLQ and QQQQRPQQQQPHH. The span at 1554-1568 shows a compositional bias: polar residues; it reads TESVNSYSASGSTNP. Arg1682 bears the Asymmetric dimethylarginine mark. His1881 is a binding site for Fe cation. 1896-1898 contacts 2-oxoglutarate; sequence RIS. Position 1902–1904 (1902–1904) interacts with substrate; the sequence is YQH. His1912 is a Zn(2+) binding site. The segment at 1932-1961 is disordered; sequence CEKYGPDYVPQKSHGKKVKREPAEPHETSE. Residues 1951–1960 are compositionally biased toward basic and acidic residues; that stretch reads REPAEPHETS.

The protein belongs to the TET family. As to quaternary structure, interacts with HCFC1. Interacts with OGT. Interacts with PROSER1; this interaction mediates TET2 O-GlcNAcylation and stability by promoting the interaction between OGT and TET2. Directly interacts (via C-terminus) with the DCAF1 component of the CRL4(VprBP) E3 ubiquitin-protein ligase complex. Requires Fe(2+) as cofactor. Zn(2+) serves as cofactor. May be glycosylated. It is unclear whether interaction with OGT leads to GlcNAcylation. According to a report, it is not GlcNAcylated by OGT. In contrast, another group reports GlcNAcylation by OGT in mouse ortholog. In terms of processing, monoubiquitinated at Lys-1299 by the DCX (DDB1-CUL4-X-box) E3 ubiquitin-protein ligase complex called CRL4(VprBP) or CUL4A-RBX1-DDB1-DCAF1/VPRBP complex; this modification promotes binding to DNA. Post-translationally, acetylated. Deacetylase HDAC6 acts as a valine sensor by binding to valine through its primate-specific SE14 repeat region and deacetylates TET2 following valine deprivation which promotes TET2-dependent DNA demethylation. As to expression, broadly expressed. Highly expressed in hematopoietic cells; highest expression observed in granulocytes. Expression is reduced in granulocytes from peripheral blood of patients affected by myelodysplastic syndromes.

It is found in the nucleus. The protein localises to the chromosome. It carries out the reaction a 5-methyl-2'-deoxycytidine in DNA + 2-oxoglutarate + O2 = a 5-hydroxymethyl-2'-deoxycytidine in DNA + succinate + CO2. It catalyses the reaction a 5-hydroxymethyl-2'-deoxycytidine in DNA + 2-oxoglutarate + O2 = a 5-formyl-2'-deoxycytidine in DNA + succinate + CO2 + H2O. The catalysed reaction is a 5-formyl-2'-deoxycytidine in DNA + 2-oxoglutarate + O2 = a 5-carboxyl-2'-deoxycytidine in DNA + succinate + CO2 + H(+). Functionally, dioxygenase that catalyzes the conversion of the modified genomic base 5-methylcytosine (5mC) into 5-hydroxymethylcytosine (5hmC) and plays a key role in active DNA demethylation. Has a preference for 5-hydroxymethylcytosine in CpG motifs. Also mediates subsequent conversion of 5hmC into 5-formylcytosine (5fC), and conversion of 5fC to 5-carboxylcytosine (5caC). Conversion of 5mC into 5hmC, 5fC and 5caC probably constitutes the first step in cytosine demethylation. Methylation at the C5 position of cytosine bases is an epigenetic modification of the mammalian genome which plays an important role in transcriptional regulation. In addition to its role in DNA demethylation, also involved in the recruitment of the O-GlcNAc transferase OGT to CpG-rich transcription start sites of active genes, thereby promoting histone H2B GlcNAcylation by OGT. This chain is Methylcytosine dioxygenase TET2 (TET2), found in Homo sapiens (Human).